A 229-amino-acid polypeptide reads, in one-letter code: Ribonuclease 3 (229 aa).

In terms of domain architecture, RNase III spans 5 to 127 (LSRLERQLGY…LIGAIYLDAG (123 aa)). Glu-40 is a binding site for Mg(2+). The active site involves Asp-44. The Mg(2+) site is built by Asp-113 and Glu-116. Glu-116 is a catalytic residue. A DRBM domain is found at 154-224 (DPKTRLQEFL…AAAALIALGV (71 aa)).

The protein belongs to the ribonuclease III family. Homodimer. The cofactor is Mg(2+).

Its subcellular location is the cytoplasm. It carries out the reaction Endonucleolytic cleavage to 5'-phosphomonoester.. In terms of biological role, digests double-stranded RNA. Involved in the processing of primary rRNA transcript to yield the immediate precursors to the large and small rRNAs (23S and 16S). Processes some mRNAs, and tRNAs when they are encoded in the rRNA operon. Processes pre-crRNA and tracrRNA of type II CRISPR loci if present in the organism. This chain is Ribonuclease 3, found in Pseudomonas fluorescens (strain ATCC BAA-477 / NRRL B-23932 / Pf-5).